The primary structure comprises 100 residues: MARKSLIQREKKRQKLEQKYYWIRQSLKKEISKVPSLREQWKIHGKLQSSPRNSAPIRLHRRCFLTGRPRANYRDFGLSGHILREMVHACLLPGATRSSW.

Belongs to the universal ribosomal protein uS14 family. Part of the 30S ribosomal subunit.

It is found in the plastid. Its subcellular location is the chloroplast. Functionally, binds 16S rRNA, required for the assembly of 30S particles. The sequence is that of Small ribosomal subunit protein uS14c from Phalaenopsis aphrodite subsp. formosana (Moth orchid).